Reading from the N-terminus, the 321-residue chain is Cytochrome f (321 aa).

An N-terminal signal peptide occupies residues 1–38 (MINLFLLKYKTAFSTFLKPFAYLSLILSVCFYSIQAQA). Positions 39, 59, 62, and 63 each coordinate heme. A helical membrane pass occupies residues 287–306 (VKGLIAFFFTVILAQILLVL).

It belongs to the cytochrome f family. The 4 large subunits of the cytochrome b6-f complex are cytochrome b6, subunit IV (17 kDa polypeptide, petD), cytochrome f and the Rieske protein, while the 4 small subunits are PetG, PetL, PetM and PetN. The complex functions as a dimer. Heme is required as a cofactor.

It localises to the plastid. The protein localises to the chloroplast thylakoid membrane. Functionally, component of the cytochrome b6-f complex, which mediates electron transfer between photosystem II (PSII) and photosystem I (PSI), cyclic electron flow around PSI, and state transitions. In Guillardia theta (Cryptophyte), this protein is Cytochrome f (petA).